The following is a 399-amino-acid chain: Lymphoid enhancer-binding factor 1 (399 aa).

Over residues 1–14 (MPQLSGGGGGGGGD) the composition is skewed to gly residues. The segment at 1–62 (MPQLSGGGGG…IKSSLVNESE (62 aa)) is CTNNB1-binding. A disordered region spans residues 1–104 (MPQLSGGGGG…KHPDGGLYNK (104 aa)). Basic and acidic residues-rich tracts occupy residues 24–45 (IPFK…SHPE) and 82–98 (PYHD…KHPD). K27 participates in a covalent cross-link: Glycyl lysine isopeptide (Lys-Gly) (interchain with G-Cter in SUMO). S132 carries the post-translational modification Phosphoserine. The residue at position 155 (T155) is a Phosphothreonine; by NLK. At S166 the chain carries Phosphoserine; by NLK. Disordered regions lie at residues 166–192 (SPGS…PAPD) and 268–298 (VKQE…KRPH). K269 is covalently cross-linked (Glycyl lysine isopeptide (Lys-Gly) (interchain with G-Cter in SUMO)). Over residues 269-296 (KQEHPHTDSDLMHVKPQHEQRKEQEPKR) the composition is skewed to basic and acidic residues. A DNA-binding region (HMG box) is located at residues 299–367 (IKKPLNAFML…LHMQLYPGWS (69 aa)). The segment at 369–399 (RDNYGKKKKRKREKLQESASGTGPRMTAAYI) is disordered.

This sequence belongs to the TCF/LEF family. As to quaternary structure, binds the armadillo repeat of CTNNB1 and forms a stable complex. Interacts with EP300, TLE1 and PIASG. Binds ALYREF/THOC4, MDFI and MDFIC. Interacts with NLK. Interacts with DAZAP2. In terms of processing, phosphorylated at Thr-155 and/or Ser-166 by NLK. Phosphorylation by NLK at these sites represses LEF1-mediated transcriptional activation of target genes of the canonical Wnt signaling pathway. Detected in thymus. Not detected in normal colon, but highly expressed in colon cancer biopsies and colon cancer cell lines. Expressed in several pancreatic tumors and weakly expressed in normal pancreatic tissue. Isoforms 1 and 5 are detected in several pancreatic cell lines.

The protein localises to the nucleus. Functionally, transcription factor that binds DNA in a sequence-specific manner. Participates in the Wnt signaling pathway. Activates transcription of target genes in the presence of CTNNB1 and EP300. PIAG antagonizes both Wnt-dependent and Wnt-independent activation by LEF1. TLE1, TLE2, TLE3 and TLE4 repress transactivation mediated by LEF1 and CTNNB1. Regulates T-cell receptor alpha enhancer function. Required for IL17A expressing gamma-delta T-cell maturation and development, via binding to regulator loci of BLK to modulate expression. Acts as a positive regulator of odontoblast differentiation during mesenchymal tooth germ formation, expression is repressed during the bell stage by MSX1-mediated inhibition of CTNNB1 signaling. May play a role in hair cell differentiation and follicle morphogenesis. Transcriptionally activates MYC and CCND1 expression and enhances proliferation of pancreatic tumor cells. Its function is as follows. Lacks the CTNNB1 interaction domain and may therefore be an antagonist for Wnt signaling. In terms of biological role, transcriptionally activates the fibronectin promoter, binds to and represses transcription from the E-cadherin promoter in a CTNNB1-independent manner, and is involved in reducing cellular aggregation and increasing cell migration of pancreatic cancer cells. The protein is Lymphoid enhancer-binding factor 1 of Homo sapiens (Human).